The chain runs to 446 residues: Maltoporin (446 aa).

A signal peptide spans 1–25; that stretch reads MMTTLRKLPLAVAVAAGMMSVQAMA.

This sequence belongs to the porin LamB (TC 1.B.3) family. Homotrimer formed of three 18-stranded antiparallel beta-barrels, containing three independent channels.

It is found in the cell outer membrane. It catalyses the reaction beta-maltose(in) = beta-maltose(out). Involved in the transport of maltose and maltodextrins. In Escherichia fergusonii (strain ATCC 35469 / DSM 13698 / CCUG 18766 / IAM 14443 / JCM 21226 / LMG 7866 / NBRC 102419 / NCTC 12128 / CDC 0568-73), this protein is Maltoporin.